We begin with the raw amino-acid sequence, 153 residues long: Large ribosomal subunit protein bL9 (153 aa).

This sequence belongs to the bacterial ribosomal protein bL9 family.

Functionally, binds to the 23S rRNA. This Blochmanniella pennsylvanica (strain BPEN) protein is Large ribosomal subunit protein bL9.